Reading from the N-terminus, the 307-residue chain is MLTANTPLLARLAENHTQMLMAHNQLTEAHTMLISQLVVQFEHDPHEPTEANKPKPFAQDVKPQPVAPSVIVEPKVVIEPAPVVEAHTKADDKPAPVVAEKKGKVAKAETKPAKAVKPMVEDPKVAPEPEPVDIESLDLRHVVSLSVLFGDKAVKPDHTQVAKAKATFAAEKADGVTGQIDALYCALNGISNIKTLSKTSTFDLCLKMLANWDNLFGITERREFALSLLHELPTPTEVKPIDFNALRSEASARITQLVKGGYRNEALDILASFNAKKLGDVTDDNLARFIEKAQSVLSDDKSEGSDG.

Basic and acidic residues predominate over residues 44 to 53 (DPHEPTEANK). Disordered regions lie at residues 44 to 64 (DPHE…VKPQ) and 109 to 129 (ETKP…APEP).

The protein is Putative protein p53 (53) of Escherichia coli (Bacteriophage APSE-1).